Reading from the N-terminus, the 509-residue chain is Mitogen-activated protein kinase sma-5 (509 aa).

The tract at residues 19–72 (DPITSMSPPQENRSPKAEYLNNFFNTNPTNGKSRGSQEAPRKPLGQTNLNVQGS) is disordered. 2 stretches are compositionally biased toward polar residues: residues 20 to 30 (PITSMSPPQEN) and 40 to 54 (NFFNTNPTNGKSRGS). The region spanning 105–411 (YEPTQNIGSG…IQDALLHPYI (307 aa)) is the Protein kinase domain. Residues 111–119 (IGSGAFGIV) and K134 contribute to the ATP site. The active-site Proton acceptor is D231. A disordered region spans residues 460 to 482 (YSELHSGDSTGSTSDMSTNTSGE). A compositionally biased stretch (low complexity) spans 466–481 (GDSTGSTSDMSTNTSG).

Belongs to the protein kinase superfamily. CMGC Ser/Thr protein kinase family. MAP kinase subfamily. Requires Mg(2+) as cofactor. Expressed in intestine with a stronger expression in the four most anterior cells, muscles, excretory cell, pharynx and, to a lesser extent, in hypodermis.

It carries out the reaction L-seryl-[protein] + ATP = O-phospho-L-seryl-[protein] + ADP + H(+). The catalysed reaction is L-threonyl-[protein] + ATP = O-phospho-L-threonyl-[protein] + ADP + H(+). Functionally, serine/threonine-protein kinase involved in the postembryonic regulation of body size, mainly through control of cell growth. In particular, controls the volume of intestine, muscles and hypodermis. In addition, regulates growth, intestinal granule distribution, lifespan and number of offspring. In Caenorhabditis elegans, this protein is Mitogen-activated protein kinase sma-5.